Consider the following 112-residue polypeptide: Large ribosomal subunit protein uL22 (112 aa).

This sequence belongs to the universal ribosomal protein uL22 family. In terms of assembly, part of the 50S ribosomal subunit.

Its function is as follows. This protein binds specifically to 23S rRNA; its binding is stimulated by other ribosomal proteins, e.g. L4, L17, and L20. It is important during the early stages of 50S assembly. It makes multiple contacts with different domains of the 23S rRNA in the assembled 50S subunit and ribosome. In terms of biological role, the globular domain of the protein is located near the polypeptide exit tunnel on the outside of the subunit, while an extended beta-hairpin is found that lines the wall of the exit tunnel in the center of the 70S ribosome. The polypeptide is Large ribosomal subunit protein uL22 (Desulfovibrio desulfuricans (strain ATCC 27774 / DSM 6949 / MB)).